The primary structure comprises 115 residues: Large ribosomal subunit protein uL22 (115 aa).

This sequence belongs to the universal ribosomal protein uL22 family. As to quaternary structure, part of the 50S ribosomal subunit.

Its function is as follows. This protein binds specifically to 23S rRNA; its binding is stimulated by other ribosomal proteins, e.g. L4, L17, and L20. It is important during the early stages of 50S assembly. It makes multiple contacts with different domains of the 23S rRNA in the assembled 50S subunit and ribosome. The globular domain of the protein is located near the polypeptide exit tunnel on the outside of the subunit, while an extended beta-hairpin is found that lines the wall of the exit tunnel in the center of the 70S ribosome. This chain is Large ribosomal subunit protein uL22, found in Thioalkalivibrio sulfidiphilus (strain HL-EbGR7).